A 147-amino-acid polypeptide reads, in one-letter code: Deoxyuridine 5'-triphosphate nucleotidohydrolase (147 aa).

Residues 67–69 (RSG), asparagine 80, and 84–86 (LID) contribute to the substrate site.

It belongs to the dUTPase family. Requires Mg(2+) as cofactor.

The catalysed reaction is dUTP + H2O = dUMP + diphosphate + H(+). Its pathway is pyrimidine metabolism; dUMP biosynthesis; dUMP from dCTP (dUTP route): step 2/2. Its function is as follows. This enzyme is involved in nucleotide metabolism: it produces dUMP, the immediate precursor of thymidine nucleotides and it decreases the intracellular concentration of dUTP so that uracil cannot be incorporated into DNA. This chain is Deoxyuridine 5'-triphosphate nucleotidohydrolase, found in Dictyoglomus turgidum (strain DSM 6724 / Z-1310).